The chain runs to 1020 residues: Sodium/potassium-transporting ATPase subunit alpha-2 (1020 aa).

The propeptide occupies 1-5 (MGRGA). The segment at 1–31 (MGRGAGREYSPAATTAENGGGKKKQKEKELD) is disordered. At 6 to 85 (GREYSPAATT…NALTPPPTTP (80 aa)) the chain is on the cytoplasmic side. S10 carries the post-translational modification Phosphoserine. Residues 80-82 (PPP) are interaction with phosphoinositide-3 kinase. The chain crosses the membrane as a helical span at residues 86-106 (EWVKFCRQLFGGFSILLWIGA). The Extracellular segment spans residues 107–129 (ILCFLAYGIQAAMEDEPSNDNLY). The chain crosses the membrane as a helical span at residues 130–150 (LGVVLAAVVIVTGCFSYYQEA). The Cytoplasmic segment spans residues 151–286 (KSSKIMDSFK…VGRTPIAMEI (136 aa)). Over residues 212–227 (DNSSLTGESEPQTRSP) the composition is skewed to polar residues. Positions 212–231 (DNSSLTGESEPQTRSPEFTH) are disordered. The chain crosses the membrane as a helical span at residues 287 to 306 (EHFIQLITGVAVFPGVSFFV). At 307 to 318 (LSLILGYSWLEA) the chain is on the extracellular side. A helical transmembrane segment spans residues 319 to 336 (VIFLIGIIVANVPEGLLA). Over 337 to 769 (TVTVCLTLTA…EEGRLVFDNL (433 aa)) the chain is Cytoplasmic. The active-site 4-aspartylphosphate intermediate is D374. S439, S450, S496, and S559 each carry phosphoserine. T570 is modified (phosphothreonine). Phosphoserine is present on residues S587 and S672. Mg(2+) contacts are provided by D714 and D718. A helical membrane pass occupies residues 770 to 789 (KKSIAYTLTSNIPEITPFLL). Residues 790 to 799 (FIIANIPLPL) lie on the Extracellular side of the membrane. The chain crosses the membrane as a helical span at residues 800–820 (GTVTILCIDLGTDMVPAISLA). Residues 821–840 (YEAAESDIMKRQPRNSQTDK) are Cytoplasmic-facing. At S826 the chain carries Phosphoserine. The chain crosses the membrane as a helical span at residues 841–863 (LVNERLISMAYGQIGMIQALGGF). Over 864–915 (FTYFVILAENGFLPSRLLGIRLDWDDRTMNDLEDSYGQEWTYEQRKVVEFTC) the chain is Extracellular. Residues 916-935 (HTAFFASIVVVQWADLIICK) traverse the membrane as a helical segment. Residues 936 to 948 (TRRNSVFQQGMKN) lie on the Cytoplasmic side of the membrane. The residue at position 940 (S940) is a Phosphoserine; by PKA. A helical membrane pass occupies residues 949–967 (KILIFGLLEETALAAFLSY). The Extracellular segment spans residues 968-982 (CPGMGVALRMYPLKV). The helical transmembrane segment at 983–1003 (TWWFCAFPYSLLIFIYDEVRK) threads the bilayer. At 1004 to 1020 (LILRRYPGGWVEKETYY) the chain is on the cytoplasmic side.

It belongs to the cation transport ATPase (P-type) (TC 3.A.3) family. Type IIC subfamily. As to quaternary structure, the sodium/potassium-transporting ATPase is composed of a catalytic alpha subunit, an auxiliary non-catalytic beta subunit and an additional regulatory subunit. Interacts with regulatory subunit FXYD1.

It is found in the membrane. The protein resides in the cell membrane. The catalysed reaction is K(+)(out) + Na(+)(in) + ATP + H2O = K(+)(in) + Na(+)(out) + ADP + phosphate + H(+). In terms of biological role, this is the catalytic component of the active enzyme, which catalyzes the hydrolysis of ATP coupled with the exchange of sodium and potassium ions across the plasma membrane. This action creates the electrochemical gradient of sodium and potassium, providing the energy for active transport of various nutrients. In Pongo abelii (Sumatran orangutan), this protein is Sodium/potassium-transporting ATPase subunit alpha-2 (ATP1A2).